The primary structure comprises 270 residues: Shikimate dehydrogenase (NADP(+)) (270 aa).

Shikimate is bound by residues Ser15–Ser17 and Thr62. Lys66 (proton acceptor) is an active-site residue. Shikimate is bound by residues Asn87 and Asp102. NADP(+) contacts are provided by residues Gly127–Ala131, Asn151–Arg156, and Met214. Tyr216 contacts shikimate. Gly238 is an NADP(+) binding site.

Belongs to the shikimate dehydrogenase family. As to quaternary structure, homodimer.

The enzyme catalyses shikimate + NADP(+) = 3-dehydroshikimate + NADPH + H(+). It participates in metabolic intermediate biosynthesis; chorismate biosynthesis; chorismate from D-erythrose 4-phosphate and phosphoenolpyruvate: step 4/7. Its function is as follows. Involved in the biosynthesis of the chorismate, which leads to the biosynthesis of aromatic amino acids. Catalyzes the reversible NADPH linked reduction of 3-dehydroshikimate (DHSA) to yield shikimate (SA). In Alkalilimnicola ehrlichii (strain ATCC BAA-1101 / DSM 17681 / MLHE-1), this protein is Shikimate dehydrogenase (NADP(+)).